We begin with the raw amino-acid sequence, 183 residues long: Inner membrane protein p54 (183 aa).

The chain crosses the membrane as a helical span at residues 32–52 (YTILIAIVVLVIIIIVLIYLF). Positions 81-157 (EVTPQPGTSK…PYTTVTTQNT (77 aa)) are disordered. The span at 111–122 (RPATNKPVTDNP) shows a compositional bias: polar residues. Over residues 130 to 143 (ATGGPAAAPAAASA) the composition is skewed to low complexity. The interaction with host DYNLL1 stretch occupies residues 149–161 (YTTVTTQNTASQT).

The protein belongs to the asfivirus envelope protein p54 family. Interacts with the host light chain cytoplasmic dynein DYNLL1; this interaction is critical for intracellular microtubule-dependent virus transport toward viral factories.

It is found in the virion membrane. Its subcellular location is the host cytoplasm. It localises to the host cytoskeleton. The protein resides in the host endoplasmic reticulum membrane. Functionally, inner envelope protein involved, through its interaction with host dynein, in the intracellular microtubule-dependent transport of viral capsid toward viral factories. Seems to induce caspase-3 activation and apoptosis. Plays a role in virion morphogenesis by recruiting and transforming the host ER membranes into the precursors of the viral envelope. Involved in virus attachment to the host cell. The chain is Inner membrane protein p54 from Ornithodoros (relapsing fever ticks).